Here is a 255-residue protein sequence, read N- to C-terminus: Hydroxyacylglutathione hydrolase (255 aa).

His-53, His-55, Asp-57, His-58, His-110, Asp-127, and His-165 together coordinate Zn(2+).

The protein belongs to the metallo-beta-lactamase superfamily. Glyoxalase II family. In terms of assembly, monomer. Zn(2+) serves as cofactor.

The catalysed reaction is an S-(2-hydroxyacyl)glutathione + H2O = a 2-hydroxy carboxylate + glutathione + H(+). The protein operates within secondary metabolite metabolism; methylglyoxal degradation; (R)-lactate from methylglyoxal: step 2/2. In terms of biological role, thiolesterase that catalyzes the hydrolysis of S-D-lactoyl-glutathione to form glutathione and D-lactic acid. This chain is Hydroxyacylglutathione hydrolase, found in Xanthomonas oryzae pv. oryzae (strain MAFF 311018).